Reading from the N-terminus, the 436-residue chain is Hydrogenobyrinate a,c-diamide synthase (436 aa).

Residues 244–435 enclose the GATase cobBQ-type domain; that stretch reads RIAVARDDAF…MHVIDFSGEA (192 aa). C327 serves as the catalytic Nucleophile.

The protein belongs to the CobB/CbiA family. Mg(2+) serves as cofactor.

The enzyme catalyses hydrogenobyrinate + 2 L-glutamine + 2 ATP + 2 H2O = hydrogenobyrinate a,c-diamide + 2 L-glutamate + 2 ADP + 2 phosphate + 2 H(+). It functions in the pathway cofactor biosynthesis; adenosylcobalamin biosynthesis; cob(II)yrinate a,c-diamide from precorrin-2 (aerobic route): step 9/10. In terms of biological role, catalyzes the ATP-dependent amidation of the two carboxylate groups at positions a and c of hydrogenobyrinate, using either L-glutamine or ammonia as the nitrogen source. This is Hydrogenobyrinate a,c-diamide synthase from Brucella abortus biovar 1 (strain 9-941).